Reading from the N-terminus, the 657-residue chain is L-glutamate oxidase precursor (657 aa).

The first 12 residues, Met-1–Arg-12, serve as a signal peptide directing secretion. Residues Glu-86, Ala-87, Arg-95, Met-120, Arg-121, Met-350, Glu-639, Trp-647, and Ile-648 each contribute to the FAD site.

Belongs to the flavin monoamine oxidase family. LGOX subfamily. The mature enzyme is a heterohexamer composed of 2 alpha chains, 2 beta chains and 2 gamma chains (alpha2beta2gamma2). Requires FAD as cofactor. The precursor form is proteolytically cleaved by an endopeptidase into alpha, beta and gamma chains, which form the stable mature enzyme.

It is found in the secreted. It carries out the reaction L-glutamate + O2 + H2O = H2O2 + 2-oxoglutarate + NH4(+). Its activity is regulated as follows. Proteinase K-treated enzyme exhibits improved affinity for the substrate, increased activity and increased thermostability. Its function is as follows. Catalyzes the oxidative deamination of L-glutamate to 2-ketoglutarate along with the production of ammonia and hydrogen peroxide. Exhibits strict specificity for L-glutamate, and shows only very weak activity with L-glutamine. The protein is L-glutamate oxidase precursor of Streptomyces diastatochromogenes.